The chain runs to 254 residues: Imidazole glycerol phosphate synthase subunit HisF (254 aa).

Active-site residues include aspartate 11 and aspartate 130.

Belongs to the HisA/HisF family. Heterodimer of HisH and HisF.

Its subcellular location is the cytoplasm. It carries out the reaction 5-[(5-phospho-1-deoxy-D-ribulos-1-ylimino)methylamino]-1-(5-phospho-beta-D-ribosyl)imidazole-4-carboxamide + L-glutamine = D-erythro-1-(imidazol-4-yl)glycerol 3-phosphate + 5-amino-1-(5-phospho-beta-D-ribosyl)imidazole-4-carboxamide + L-glutamate + H(+). The protein operates within amino-acid biosynthesis; L-histidine biosynthesis; L-histidine from 5-phospho-alpha-D-ribose 1-diphosphate: step 5/9. Functionally, IGPS catalyzes the conversion of PRFAR and glutamine to IGP, AICAR and glutamate. The HisF subunit catalyzes the cyclization activity that produces IGP and AICAR from PRFAR using the ammonia provided by the HisH subunit. The chain is Imidazole glycerol phosphate synthase subunit HisF from Acidiphilium cryptum (strain JF-5).